Consider the following 539-residue polypeptide: Eukaryotic translation initiation factor 3 subunit L (539 aa).

Positions 302–514 (TFSSILLYIQ…IHIADTKVSH (213 aa)) constitute a PCI domain.

It belongs to the eIF-3 subunit L family. In terms of assembly, component of the eukaryotic translation initiation factor 3 (eIF-3) complex.

The protein resides in the cytoplasm. In terms of biological role, component of the eukaryotic translation initiation factor 3 (eIF-3) complex, which is involved in protein synthesis of a specialized repertoire of mRNAs and, together with other initiation factors, stimulates binding of mRNA and methionyl-tRNAi to the 40S ribosome. The eIF-3 complex specifically targets and initiates translation of a subset of mRNAs involved in cell proliferation. The polypeptide is Eukaryotic translation initiation factor 3 subunit L (Anopheles gambiae (African malaria mosquito)).